The sequence spans 324 residues: Cathepsin L-like proteinase (324 aa).

Positions 1–16 are cleaved as a signal peptide; the sequence is MKLIIALAALIVVINA. 3 cysteine pairs are disulfide-bonded: Cys-131–Cys-174, Cys-165–Cys-206, and Cys-263–Cys-312. Residue Cys-134 is part of the active site. Residues His-270 and Asn-290 contribute to the active site.

It belongs to the peptidase C1 family. Expressed in larval carcasses and gut, and adult gut.

The sequence is that of Cathepsin L-like proteinase from Phaedon cochleariae (Mustard beetle).